The following is a 170-amino-acid chain: 3-hydroxyacyl-[acyl-carrier-protein] dehydratase FabZ (170 aa).

The active site involves histidine 66.

The protein belongs to the thioester dehydratase family. FabZ subfamily.

It is found in the cytoplasm. It carries out the reaction a (3R)-hydroxyacyl-[ACP] = a (2E)-enoyl-[ACP] + H2O. In terms of biological role, involved in unsaturated fatty acids biosynthesis. Catalyzes the dehydration of short chain beta-hydroxyacyl-ACPs and long chain saturated and unsaturated beta-hydroxyacyl-ACPs. In Granulibacter bethesdensis (strain ATCC BAA-1260 / CGDNIH1), this protein is 3-hydroxyacyl-[acyl-carrier-protein] dehydratase FabZ.